The chain runs to 103 residues: Large ribosomal subunit protein bL21 (103 aa).

Belongs to the bacterial ribosomal protein bL21 family. In terms of assembly, part of the 50S ribosomal subunit. Contacts protein L20.

In terms of biological role, this protein binds to 23S rRNA in the presence of protein L20. In Ectopseudomonas mendocina (strain ymp) (Pseudomonas mendocina), this protein is Large ribosomal subunit protein bL21.